A 131-amino-acid chain; its full sequence is MQFTLIFFYATLAAFGLAAPSEQVGRDVVQEGDELDKRINFKIPYTGADLVDGDDVQEGDKLDKRINFKIPYTGADMVDGDDVQEGDKLDKRIGFKLPYRGADMVDGDDVQEGDELAKRPNFKMPYKGADM.

Residues 1–18 form the signal peptide; that stretch reads MQFTLIFFYATLAAFGLA. Propeptides lie at residues 19–38, 48–65, 75–92, 102–119, and 129–131; these read APSE…LDKR, ADLV…LDKR, ADMV…LDKR, ADMV…LAKR, and ADM.

GigA is processed by several endopeptidases including kexin proteases to produce 2 identical copies of the nonaxapeptide Ile-Asn-Phe-Lys-Ile-Pro-Tyr-Thr-Gly, one copy of the nonaketide Ile-Gly-Phe-Lys-Leu-Pro-Tyr-Arg-Gly and one copy of the nonaketide Pro-Asn-Phe-Lys-Met-Pro-Tyr-Arg-Gly, that are further modified into phomapsins B, C and A, respectively. After being excised from the precursor peptide, the core peptides are cyclized and modified post-translationally by enzymes encoded within the gene cluster. Epichloecyclin biosynthesis requires only dimethylation of the side-chain amino group of the conserved lysine for completion.

It participates in mycotoxin biosynthesis. In terms of biological role, ribosomally synthesized cyclic peptide phomopsin precursor; part of the gene cluster that mediates the biosynthesis of the epichloecyclins, a group of nonapeptides, with a likely cyclic structure and dimethylation of the conserved lysine. The gigA translated product contains 4 repeated peptide embedding the nonapeptide Ile-Asn-Phe-Lys-Ile-Pro-Tyr-Thr-Gly in repeats 1 and 2, Ile-Gly-Phe-Lys-Leu-Pro-Tyr-Arg-Gly in repeat 3, and Pro-Asn-Phe-Lys-Met-Pro-Tyr-Arg-Gly in repeat 4 that are converted into epichloecyclins B, C and A, respectively. Moreover, removal of the last Gly residue in epichloecyclins B and C leads to epichloecyclins D and E, respectively. The protein is Ribosomally synthesized cyclic peptide phomopsin precursor gigA (nc25) of Epichloe festucae (strain Fl1).